The chain runs to 453 residues: MWELDPKTLEKWDKEYFWHPFTQMKVYREEENLIFERGEGVYLWDIYGRKYIDAISSLWCNVHGHNHPKLNNAVMKQLCKVAHTTTLGSSNVPAILLAKKLVEISPEGLNKVFYSEDGAEAVEIAIKMAYHYWKNKGVKGKNVFITLSEAYHGDTVGAVSVGGIELFHGTYKDLLFKTIKLPSPYLYCKEKYGELCPECTADLLKQLEDILKSREDIVAVIMEAGIQAAAGMLPFPPGFLKGVRELTKKYDTLMIVDEVATGFGRTGTMFYCEQEGVSPDFMCLGKGITGGYLPLAATLTTDEVFNAFLGEFGEAKHFYHGHTYTGNNLACSVALANLEVFEEERTLEKLQPKIKLLKERLQEFWELKHVGDVRQLGFMAGIELVKDKEKGEPFPYGERTGFKVAYKCREKGVFLRPLGDVMVLMMPLVIEEDEMNYVIDTLKWAIKELEKEV.

Residue 118–119 coordinates pyridoxal 5'-phosphate; the sequence is GA. Y151 is a substrate binding site. D257 lines the pyridoxal 5'-phosphate pocket. K286, G321, and R416 together coordinate substrate. K286 carries the N6-(pyridoxal phosphate)lysine modification.

Belongs to the class-III pyridoxal-phosphate-dependent aminotransferase family. BioA subfamily. Homodimer. Requires pyridoxal 5'-phosphate as cofactor.

It is found in the cytoplasm. The enzyme catalyses (8S)-8-amino-7-oxononanoate + S-adenosyl-L-methionine = S-adenosyl-4-methylsulfanyl-2-oxobutanoate + (7R,8S)-7,8-diammoniononanoate. Its pathway is cofactor biosynthesis; biotin biosynthesis; 7,8-diaminononanoate from 8-amino-7-oxononanoate (SAM route): step 1/1. Catalyzes the transfer of the alpha-amino group from S-adenosyl-L-methionine (SAM) to 7-keto-8-aminopelargonic acid (KAPA) to form 7,8-diaminopelargonic acid (DAPA). It is the only aminotransferase known to utilize SAM as an amino donor. The chain is Adenosylmethionine-8-amino-7-oxononanoate aminotransferase from Aquifex aeolicus (strain VF5).